Reading from the N-terminus, the 434-residue chain is 3-phosphoshikimate 1-carboxyvinyltransferase (434 aa).

3 residues coordinate 3-phosphoshikimate: Lys15, Ser16, and Arg20. Lys15 contacts phosphoenolpyruvate. Positions 96 and 124 each coordinate phosphoenolpyruvate. 3-phosphoshikimate-binding residues include Ser169, Gln171, Ser195, Asp319, and Lys346. Residue Gln171 coordinates phosphoenolpyruvate. The active-site Proton acceptor is Asp319. Residues Arg350 and Arg394 each coordinate phosphoenolpyruvate.

It belongs to the EPSP synthase family. In terms of assembly, monomer.

It localises to the cytoplasm. The catalysed reaction is 3-phosphoshikimate + phosphoenolpyruvate = 5-O-(1-carboxyvinyl)-3-phosphoshikimate + phosphate. It functions in the pathway metabolic intermediate biosynthesis; chorismate biosynthesis; chorismate from D-erythrose 4-phosphate and phosphoenolpyruvate: step 6/7. Functionally, catalyzes the transfer of the enolpyruvyl moiety of phosphoenolpyruvate (PEP) to the 5-hydroxyl of shikimate-3-phosphate (S3P) to produce enolpyruvyl shikimate-3-phosphate and inorganic phosphate. This chain is 3-phosphoshikimate 1-carboxyvinyltransferase, found in Chlorobium phaeobacteroides (strain DSM 266 / SMG 266 / 2430).